Consider the following 1381-residue polypeptide: Protein HEG homolog 1 (1381 aa).

Positions 1–29 (MASPRASRWPPPLLLLLLPLLLLPPAAPG) are cleaved as a signal peptide. The segment at 24–108 (PPAAPGTRDP…APRGGSADAA (85 aa)) is disordered. The span at 25–37 (PAAPGTRDPPPSP) shows a compositional bias: pro residues. The Extracellular segment spans residues 30-1248 (TRDPPPSPAR…GLNCGNPYQL (1219 aa)). Low complexity predominate over residues 38–52 (ARRALSLAPLAGAGL). Positions 55–74 (QLERRPEREPPPTPPRERRG) are enriched in basic and acidic residues. Residue Thr67 is glycosylated (O-linked (GalNAc...) threonine). Low complexity predominate over residues 93 to 105 (RGPSGRAPRGGSA). Asn123, Asn159, Asn180, and Asn314 each carry an N-linked (GlcNAc...) asparagine glycan. The segment covering 301–316 (DLSSSSESTEKLNNST) has biased composition (low complexity). 2 disordered regions span residues 301 to 325 (DLSS…SVSQ) and 376 to 447 (PSAV…RSVA). Residues 424–444 (LASSSEVQNGSPMSQTETVSR) show a composition bias toward polar residues. Residues Asn462, Asn520, and Asn610 are each glycosylated (N-linked (GlcNAc...) asparagine). Positions 491-529 (STVQSGGSHTALGDRSYSESSSTSSSESLNSSAPRGERS) are disordered. Over residues 508-522 (SESSSTSSSESLNSS) the composition is skewed to low complexity. Disordered regions lie at residues 612–680 (SSYD…PLPS), 706–757 (SDAS…PVTS), and 774–830 (QTAD…TLPA). Positions 620–648 (QPSTESPVLHTSNLPSYTPTINMPNTSVV) are enriched in polar residues. 2 stretches are compositionally biased toward low complexity: residues 657–680 (SDSS…PLPS) and 706–748 (SDAS…PVLP). Polar residues-rich tracts occupy residues 774–784 (QTADLKSQSTP) and 792–809 (ESKS…TKAV). A compositionally biased stretch (low complexity) spans 810–825 (TTNSPLPPSLTESSTE). The region spanning 985–1023 (SVNSCAVNPCLHNGECVADNTSRGYHCRCPPSWQGDDCS) is the EGF-like 1 domain. 6 cysteine pairs are disulfide-bonded: Cys989-Cys1000, Cys994-Cys1011, Cys1013-Cys1022, Cys1029-Cys1040, Cys1034-Cys1049, and Cys1051-Cys1062. Positions 1025 to 1063 (DVNECLSNPCPSTAMCNNTQGSFICKCPVGYQLEKGICN) constitute an EGF-like 2; calcium-binding domain. An N-linked (GlcNAc...) asparagine glycan is attached at Asn1137. A helical membrane pass occupies residues 1249–1269 (ITVVIAAAGGGLLLILGIALI). The Cytoplasmic portion of the chain corresponds to 1270–1381 (VTCCRKNKND…SDESRRRDYF (112 aa)). Ser1359 carries the phosphoserine modification.

As to quaternary structure, interacts with CCM2 and KRIT1; KRIT1 markedly facilitates interaction with CCM2.

The protein resides in the cell membrane. It is found in the cell junction. The protein localises to the secreted. In terms of biological role, receptor component of the CCM signaling pathway which is a crucial regulator of heart and vessel formation and integrity. May act through the stabilization of endothelial cell junctions. The sequence is that of Protein HEG homolog 1 (HEG1) from Homo sapiens (Human).